The primary structure comprises 197 residues: Tyrosine-protein phosphatase-like protein OCA2 (197 aa).

Residues 10-160 (SPVVSTDVSL…FETNLKIPRN (151 aa)) form the Tyrosine-protein phosphatase domain. Residue Ser181 is modified to Phosphoserine.

This sequence belongs to the protein-tyrosine phosphatase family.

The protein localises to the cytoplasm. Its function is as follows. Required for normal growth in the presence of linoleic acid hydroperoxide (LoaOOH). This Saccharomyces cerevisiae (strain ATCC 204508 / S288c) (Baker's yeast) protein is Tyrosine-protein phosphatase-like protein OCA2 (OCA2).